A 227-amino-acid chain; its full sequence is Acyl-protein thioesterase 1 (227 aa).

Catalysis depends on charge relay system residues serine 119, aspartate 173, and histidine 207.

The protein belongs to the AB hydrolase superfamily. AB hydrolase 2 family.

Its subcellular location is the cytoplasm. It is found in the nucleus. The catalysed reaction is S-hexadecanoyl-L-cysteinyl-[protein] + H2O = L-cysteinyl-[protein] + hexadecanoate + H(+). Its function is as follows. Hydrolyzes fatty acids from S-acylated cysteine residues in proteins with a strong preference for palmitoylated G-alpha proteins over other acyl substrates. Mediates the deacylation of G-alpha proteins such as GPA1 in vivo, but has weak or no activity toward palmitoylated Ras proteins. Has weak lysophospholipase activity in vitro; however such activity may not exist in vivo. In Saccharomyces cerevisiae (strain ATCC 204508 / S288c) (Baker's yeast), this protein is Acyl-protein thioesterase 1.